The following is a 404-amino-acid chain: Acetate kinase (404 aa).

Asparagine 7 is a Mg(2+) binding site. Position 14 (lysine 14) interacts with ATP. Arginine 98 serves as a coordination point for substrate. Aspartate 155 (proton donor/acceptor) is an active-site residue. ATP is bound by residues 214-218 (HLGNG), 289-291 (DLR), and 337-341 (GIGEN). Glutamate 390 contributes to the Mg(2+) binding site.

Belongs to the acetokinase family. In terms of assembly, homodimer. Requires Mg(2+) as cofactor. Mn(2+) is required as a cofactor.

Its subcellular location is the cytoplasm. It catalyses the reaction acetate + ATP = acetyl phosphate + ADP. Its pathway is metabolic intermediate biosynthesis; acetyl-CoA biosynthesis; acetyl-CoA from acetate: step 1/2. In terms of biological role, catalyzes the formation of acetyl phosphate from acetate and ATP. Can also catalyze the reverse reaction. This Rippkaea orientalis (strain PCC 8801 / RF-1) (Cyanothece sp. (strain PCC 8801)) protein is Acetate kinase.